The primary structure comprises 37 residues: Large ribosomal subunit protein bL36 (37 aa).

The protein belongs to the bacterial ribosomal protein bL36 family.

In Geobacter sp. (strain M21), this protein is Large ribosomal subunit protein bL36.